A 243-amino-acid chain; its full sequence is MLWMVWVFLLKPVIVFSIAYILFRLAGKKAVSQMNNFDLLLTFAIGTIISEPILTSKLPMSIYYAGAFLVLYLIMSKLSLSNKWRWLLVVSPTVLIRNGDIDERGLRKERLTVNELLGKLREKGYADPADIDLAIIEETGEVSVIPKEEARAVQVRDLNMEAERNFIPIPLILDGEILDHNLKYLQKNRSWLFEKLEEKGYSPKLLSSIILGTMNARGDISLDLNTANEPQHDPYLYKPGNNN.

3 consecutive transmembrane segments (helical) span residues 3–23 (WMVW…YILF), 34–54 (MNNF…EPIL), and 58–78 (LPMS…MSKL).

Belongs to the UPF0702 family.

The protein resides in the cell membrane. The chain is UPF0702 transmembrane protein YkjA (ykjA) from Bacillus subtilis (strain 168).